A 2091-amino-acid chain; its full sequence is Protein Ycf2 (2091 aa).

A disordered region spans residues 191–210 (DSSQLKGSSDQSRDPLDSIS). 1432–1439 (GSIGTGRS) provides a ligand contact to ATP.

It belongs to the Ycf2 family.

The protein localises to the plastid. Its subcellular location is the chloroplast stroma. Functionally, probable ATPase of unknown function. Its presence in a non-photosynthetic plant (Epifagus virginiana) and experiments in tobacco indicate that it has an essential function which is probably not related to photosynthesis. This chain is Protein Ycf2, found in Daucus carota (Wild carrot).